A 172-amino-acid chain; its full sequence is Large ribosomal subunit protein eL20 (172 aa).

The protein belongs to the eukaryotic ribosomal protein eL20 family. In terms of assembly, component of the large ribosomal subunit. Mature ribosomes consist of a small (40S) and a large (60S) subunit. The 40S subunit contains about 32 different proteins and 1 molecule of RNA (18S). The 60S subunit contains 45 different proteins and 3 molecules of RNA (25S, 5.8S and 5S).

The protein localises to the cytoplasm. Functionally, component of the ribosome, a large ribonucleoprotein complex responsible for the synthesis of proteins in the cell. The small ribosomal subunit (SSU) binds messenger RNAs (mRNAs) and translates the encoded message by selecting cognate aminoacyl-transfer RNA (tRNA) molecules. The large subunit (LSU) contains the ribosomal catalytic site termed the peptidyl transferase center (PTC), which catalyzes the formation of peptide bonds, thereby polymerizing the amino acids delivered by tRNAs into a polypeptide chain. The nascent polypeptides leave the ribosome through a tunnel in the LSU and interact with protein factors that function in enzymatic processing, targeting, and the membrane insertion of nascent chains at the exit of the ribosomal tunnel. The polypeptide is Large ribosomal subunit protein eL20 (Candida albicans (strain SC5314 / ATCC MYA-2876) (Yeast)).